We begin with the raw amino-acid sequence, 265 residues long: Undecaprenyl-diphosphatase (265 aa).

A run of 7 helical transmembrane segments spans residues 38-58 (RSDF…CLAL), 75-95 (RDYV…GLIV), 108-128 (PVAW…HVAG), 135-155 (VVTW…GVFP), 181-201 (FVFM…LLEM), 215-235 (VAVA…WLLS), and 244-264 (VFAV…PAAA).

The protein belongs to the UppP family.

Its subcellular location is the cell inner membrane. The catalysed reaction is di-trans,octa-cis-undecaprenyl diphosphate + H2O = di-trans,octa-cis-undecaprenyl phosphate + phosphate + H(+). Catalyzes the dephosphorylation of undecaprenyl diphosphate (UPP). Confers resistance to bacitracin. In Xanthomonas oryzae pv. oryzae (strain MAFF 311018), this protein is Undecaprenyl-diphosphatase.